The primary structure comprises 251 residues: Probable transcriptional regulatory protein Blon_1155/BLIJ_1182 (251 aa).

It belongs to the TACO1 family.

The protein localises to the cytoplasm. In Bifidobacterium longum subsp. infantis (strain ATCC 15697 / DSM 20088 / JCM 1222 / NCTC 11817 / S12), this protein is Probable transcriptional regulatory protein Blon_1155/BLIJ_1182.